We begin with the raw amino-acid sequence, 342 residues long: Anthranilate phosphoribosyltransferase (342 aa).

Residues G80, 83-84 (GD), T88, 90-93 (NIST), 108-116 (KHGNRAVSS), and S120 each bind 5-phospho-alpha-D-ribose 1-diphosphate. G80 provides a ligand contact to anthranilate. Residue S92 participates in Mg(2+) binding. N111 provides a ligand contact to anthranilate. R166 is an anthranilate binding site. Mg(2+)-binding residues include D225 and E226.

The protein belongs to the anthranilate phosphoribosyltransferase family. As to quaternary structure, homodimer. Mg(2+) serves as cofactor.

It catalyses the reaction N-(5-phospho-beta-D-ribosyl)anthranilate + diphosphate = 5-phospho-alpha-D-ribose 1-diphosphate + anthranilate. Its pathway is amino-acid biosynthesis; L-tryptophan biosynthesis; L-tryptophan from chorismate: step 2/5. Functionally, catalyzes the transfer of the phosphoribosyl group of 5-phosphorylribose-1-pyrophosphate (PRPP) to anthranilate to yield N-(5'-phosphoribosyl)-anthranilate (PRA). The polypeptide is Anthranilate phosphoribosyltransferase (Halalkalibacterium halodurans (strain ATCC BAA-125 / DSM 18197 / FERM 7344 / JCM 9153 / C-125) (Bacillus halodurans)).